The primary structure comprises 54 residues: MARNEIRPIVKLRSTAGTGYTYVTRKNRRNDPDRLMLKKYDPVVRRHVDFREER.

This sequence belongs to the bacterial ribosomal protein bL33 family.

The sequence is that of Large ribosomal subunit protein bL33B from Mycobacterium sp. (strain JLS).